A 687-amino-acid chain; its full sequence is Protein white (687 aa).

Positions 1–30 are disordered; sequence MGQEDQELLIRGGSKHPSAEHLNNGDSGAA. Over 1–419 the chain is Cytoplasmic; sequence MGQEDQELLI…FMQFRAVLWR (419 aa). The region spanning 93 to 341 is the ABC transporter domain; it reads NRTRGLFCNE…FSYVGAQCPT (249 aa). Residue 130 to 137 coordinates ATP; the sequence is GSSGAGKT. The chain crosses the membrane as a helical span at residues 420-440; that stretch reads SWLSVLKEPLLVKVRLIQTTM. The Extracellular portion of the chain corresponds to 441-460; that stretch reads VAILIGLIFLGQQLTQVGVM. Residues 461–481 traverse the membrane as a helical segment; it reads NINGAIFLFLTNMTFQNVFAT. At 482–497 the chain is on the cytoplasmic side; sequence INVFTSELPVFMREAR. A helical membrane pass occupies residues 498-518; the sequence is SRLYRCDTYFLGKTIAELPLF. Topologically, residues 519–531 are extracellular; it reads LTVPLVFTAIAYP. Residues 532–552 traverse the membrane as a helical segment; it reads MIGLRAGVLHFFNCLALVTLV. At 553-568 the chain is on the cytoplasmic side; sequence ANVSTSFGYLISCASS. The helical transmembrane segment at 569–589 threads the bilayer; sequence STSMALSVGPPVIIPFLLFGG. At 590–644 the chain is on the extracellular side; the sequence is FFLNSGSVPVYLKWLSYLSWFRYANEGLLINQWADVEPGEISCTSSNTTCPSSGK. A glycan (N-linked (GlcNAc...) asparagine) is linked at asparagine 636. A helical transmembrane segment spans residues 645–665; it reads VILETLNFSAADLPLDYVGLA. Residues 666–675 are Cytoplasmic-facing; sequence ILIVSFRVLA.

Belongs to the ABC transporter superfamily. ABCG family. Eye pigment precursor importer (TC 3.A.1.204) subfamily. In terms of assembly, may form a heterodimer with bw/brown. May form a heterodimer with st/scarlet. In terms of tissue distribution, expressed in the head (at protein level). Expressed in the eye, specifically in retina primary pigment cells, in the basement membrane of the base of secondary and tertiary pigment cells, and in retinula cells (at protein level). Expressed in the retina underlying lamina in the epithelial glia that surrounds the array of lamina cartridges (at protein level). Weakly expressed in photoreceptors, specifically in terminals of R1-R6, R7 and R8 (at protein level). Expressed at very low levels in medulla and central brain (at protein level). Expressed in principal cells of the Malpighian tubules.

It localises to the cytoplasmic vesicle membrane. It carries out the reaction 3',5'-cyclic GMP(in) + ATP + H2O = 3',5'-cyclic GMP(out) + ADP + phosphate + H(+). The enzyme catalyses guanine(out) + ATP + H2O = guanine(in) + ADP + phosphate + H(+). The catalysed reaction is riboflavin(in) + ATP + H2O = riboflavin(out) + ADP + phosphate + H(+). It catalyses the reaction (6S)-5,6,7,8-tetrahydrofolate(out) + ATP + H2O = (6S)-5,6,7,8-tetrahydrofolate(in) + ADP + phosphate + H(+). It carries out the reaction L-tryptophan(out) + ATP + H2O = L-tryptophan(in) + ADP + phosphate + H(+). The enzyme catalyses L-kynurenine(out) + ATP + H2O = L-kynurenine(in) + ADP + phosphate + H(+). The catalysed reaction is xanthine(out) + ATP + H2O = xanthine(in) + ADP + phosphate + H(+). ATP-dependent transporter of the ATP-binding cassette (ABC) family which transports various molecules including bioamines, neurotransmitters, metabolic intermediates and second messengers. In the eye, required for the transport of the eye red and brown pigment precursors, guanine and tryptophan, into pigment cell granules. Probably in association with bw/brown, involved in the transport of guanine. Probably in association with st/scarlet involved in the transport of kynurenine and probably tryptophan. Involved in the transport of kynurenine in pupal eyes. May play a role in histamine uptake by the lamina epithelial glia which surrounds photoreceptors R1-R6. In Malpighian tubules, involved in the transport of cGMP, guanine, xanthine, riboflavin, kynurenine and tryptophan. Probably in association with br/brown, involved in aging-induced intestinal stem cell proliferation in the midgut by regulating tetrahydrofolate transport. Probably in association with st/scarlet, plays a role in zinc storage granule biogenesis in Malpighian tubule principal epithelial cells. The sequence is that of Protein white from Drosophila melanogaster (Fruit fly).